The chain runs to 146 residues: Ferric uptake regulation protein 2 (146 aa).

C96 and C99 together coordinate Zn(2+).

It belongs to the Fur family.

It localises to the cytoplasm. Functionally, acts as a global negative controlling element, employing Fe(2+) as a cofactor to bind the operator of the repressed genes. In Mycolicibacterium fortuitum (Mycobacterium fortuitum), this protein is Ferric uptake regulation protein 2 (fur2).